A 314-amino-acid chain; its full sequence is Olfactory receptor 1468 (314 aa).

Residues 1 to 25 lie on the Extracellular side of the membrane; it reads MTEENQTVISQFLLLGLPIPSEHQH. N5 is a glycosylation site (N-linked (GlcNAc...) asparagine). Residues 26–49 traverse the membrane as a helical segment; sequence VFYALFLSMYLTTVLGNLIIIILI. Residues 50 to 57 lie on the Cytoplasmic side of the membrane; sequence HLDSHLHT. The chain crosses the membrane as a helical span at residues 58-79; that stretch reads PMYLFLSNLSFSDLCFSSVTMP. Residues 80 to 100 lie on the Extracellular side of the membrane; the sequence is KLLQNMQSQVPSIPFAGCLTQ. A disulfide bond links C97 and C189. Residues 101-120 form a helical membrane-spanning segment; that stretch reads LYFYLYFADLESFLLVAMAY. At 121-139 the chain is on the cytoplasmic side; the sequence is DRYVAICFPLHYMSIMSPK. The helical transmembrane segment at 140–158 threads the bilayer; the sequence is LCVSLVVLSWVLTTFHAML. Over 159–196 the chain is Extracellular; the sequence is HTLLMARLSFCADNMIPHFFCDISPLLKLSCSDTHVNE. A helical membrane pass occupies residues 197–219; sequence LVIFVMGGLVIVIPFVLIIVSYA. The Cytoplasmic portion of the chain corresponds to 220 to 236; sequence RVVASILKVPSVRGIHK. A helical membrane pass occupies residues 237–260; the sequence is IFSTCGSHLSVVSLFYGTIIGLYL. Residues 261–272 are Extracellular-facing; it reads CPSANNSTVKET. Residues 273-292 form a helical membrane-spanning segment; it reads VMAMMYTVVTPMLNPFIYSL. At 293–314 the chain is on the cytoplasmic side; sequence RNRDMKEALIRVLCKKKITFCL.

The protein belongs to the G-protein coupled receptor 1 family. As to expression, olfactory epithelium.

The protein localises to the cell membrane. Odorant receptor. This chain is Olfactory receptor 1468 (Olr1468), found in Rattus norvegicus (Rat).